A 135-amino-acid chain; its full sequence is Multifunctional methyltransferase subunit TRM112 (135 aa).

A TRM112 domain is found at K2–P131.

Belongs to the TRM112 family. Heterodimer of MTQ2-TRM112, forming the eRF1 methyltransferase. TRM112 is necessary for the solubility and activity of the catalytic subunit MTQ2. Interacts with TRM11; required for full tRNA methyltransferase activity. Interacts with BUD23; required for full rRNA methyltransferase activity. Interacts with RCM1, NOP2, TRM9 and LYS9.

The protein resides in the cytoplasm. It localises to the nucleus. In terms of biological role, acts as an activator of both rRNA/tRNA and protein methyltransferases. Together with methyltransferase MTQ2, required for the methylation of eRF1 on 'Gln-182'. Together with methyltransferase TRM11, required for the formation of 2-methylguanosine at position 10 (m2G10) in tRNA. Together with methyltransferase BUD23, required for the formation of 7-methylguanine at position 1575 (m7G1575) in 18S rRNA. Involved in biogenesis of both 40S and 60S ribosomal subunits. The protein is Multifunctional methyltransferase subunit TRM112 (TRM112) of Saccharomyces cerevisiae (strain ATCC 204508 / S288c) (Baker's yeast).